We begin with the raw amino-acid sequence, 134 residues long: Cytochrome b (134 aa).

3 consecutive transmembrane segments (helical) span residues 33–53, 77–98, and 113–133; these read FGSL…FLAM, WLLR…YLHV, and WNVG…GYVL. Positions 83 and 97 each coordinate heme b.

It belongs to the cytochrome b family. As to quaternary structure, the cytochrome bc1 complex contains 11 subunits: 3 respiratory subunits (MT-CYB, CYC1 and UQCRFS1), 2 core proteins (UQCRC1 and UQCRC2) and 6 low-molecular weight proteins (UQCRH/QCR6, UQCRB/QCR7, UQCRQ/QCR8, UQCR10/QCR9, UQCR11/QCR10 and a cleavage product of UQCRFS1). This cytochrome bc1 complex then forms a dimer. Requires heme b as cofactor.

It is found in the mitochondrion inner membrane. Functionally, component of the ubiquinol-cytochrome c reductase complex (complex III or cytochrome b-c1 complex) that is part of the mitochondrial respiratory chain. The b-c1 complex mediates electron transfer from ubiquinol to cytochrome c. Contributes to the generation of a proton gradient across the mitochondrial membrane that is then used for ATP synthesis. The protein is Cytochrome b (MT-CYB) of Chiroderma trinitatum (Little big-eyed bat).